The sequence spans 1486 residues: Glutamate synthase [NADPH] large chain (1486 aa).

A propeptide spanning residues 1-11 (MLYDKSLERDN) is cleaved from the precursor. Cysteine 12 (nucleophile) is an active-site residue. A Glutamine amidotransferase type-2 domain is found at 12–402 (CGFGLIAHIE…PGELMVIDTR (391 aa)). 1049–1101 (LVETQQALVANGLRHKIRLQVDGGLKTGVDIIKAAILGAESFGFGTGPMVALG) is a binding site for FMN. 3 residues coordinate [3Fe-4S] cluster: cysteine 1102, cysteine 1108, and cysteine 1113.

It belongs to the glutamate synthase family. Aggregate of 4 catalytic active heterodimers, consisting of a large and a small subunit. Requires [3Fe-4S] cluster as cofactor. FAD serves as cofactor. It depends on FMN as a cofactor.

The enzyme catalyses 2 L-glutamate + NADP(+) = L-glutamine + 2-oxoglutarate + NADPH + H(+). The protein operates within amino-acid biosynthesis; L-glutamate biosynthesis via GLT pathway; L-glutamate from 2-oxoglutarate and L-glutamine (NADP(+) route): step 1/1. It functions in the pathway energy metabolism; nitrogen metabolism. Catalyzes the conversion of L-glutamine and 2-oxoglutarate into two molecules of L-glutamate. The chain is Glutamate synthase [NADPH] large chain (gltB) from Escherichia coli (strain K12).